A 245-amino-acid polypeptide reads, in one-letter code: ATP synthase subunit a (245 aa).

7 helical membrane-spanning segments follow: residues 5-25 (LWFT…MMSV), 37-57 (ISNY…FFIA), 99-119 (YIVT…IPGF), 125-145 (FPSV…VHGL), 157-177 (FLGP…CSHF), 187-209 (LYAN…PLGF), and 221-241 (SLIQ…EATA).

It belongs to the ATPase A chain family. F-type ATPases have 2 components, CF(1) - the catalytic core - and CF(0) - the membrane proton channel. CF(1) has five subunits: alpha(3), beta(3), gamma(1), delta(1), epsilon(1). CF(0) has three main subunits: a(1), b(2) and c(9-12). The alpha and beta chains form an alternating ring which encloses part of the gamma chain. CF(1) is attached to CF(0) by a central stalk formed by the gamma and epsilon chains, while a peripheral stalk is formed by the delta and b chains.

It is found in the cell inner membrane. Key component of the proton channel; it plays a direct role in the translocation of protons across the membrane. The polypeptide is ATP synthase subunit a (Koribacter versatilis (strain Ellin345)).